The following is a 492-amino-acid chain: Aerolysin (492 aa).

Positions 1–21 are cleaved as a signal peptide; that stretch reads MKALKITGLSLIISATLAAQT. Disulfide bonds link Cys-42–Cys-98 and Cys-182–Cys-187. The tract at residues 68–84 is interaction with host N-linked glycan; it reads WQISGLANNWVILGPGY. The segment at 256 to 288 is part of the transmembrane beta-barrel after proteolytic activation of the toxin and insertion into the host membrane; sequence YGLSEKVSTKNKFKWPLVGETEVSIEIAANQSW. Residues 346 to 355 form an interaction with glycans from host GPI-anchor region; that stretch reads RWGGNAWHTH. Positions 446–492 are excised as a propeptide; sequence GSDSKVRRTRSVDGANTGLKLDIPLDAQELAELGFENVTLSVTPARN.

The protein belongs to the aerolysin family. As to quaternary structure, homodimer in solution; homoheptamer in the host membrane. After binding to GPI-anchored proteins in target membranes and proteolytic removal of the C-terminal propeptide, the protein assembles into a heptameric pre-pore complex. A further conformation change leads to insertion into the host membrane. In terms of processing, proteolytic cleavage and subsequent release of the propeptide trigger a major conformation change, leading to the formation of a heptameric pre-pore that then inserts into the host membrane.

The protein localises to the secreted. It is found in the host cell membrane. Secreted, cytolytic toxin that forms pores in host membranes after proteolytic removal of a C-terminal propeptide, leading to destruction of the membrane permeability barrier and cell death. The pores are formed by transmembrane beta-strands and are approximately 3 nm in diameter. This chain is Aerolysin (aerA), found in Aeromonas enteropelogenes (Aeromonas trota).